We begin with the raw amino-acid sequence, 100 residues long: Protein translation factor SUI1 homolog (100 aa).

It belongs to the SUI1 family.

This is Protein translation factor SUI1 homolog from Thermoplasma volcanium (strain ATCC 51530 / DSM 4299 / JCM 9571 / NBRC 15438 / GSS1).